Consider the following 339-residue polypeptide: tRNA N6-adenosine threonylcarbamoyltransferase (339 aa).

2 residues coordinate Fe cation: His-111 and His-115. Residues 139–143 (LVSGG), Asp-172, Gly-185, Asp-189, and Asn-280 each bind substrate. Asp-308 contacts Fe cation.

This sequence belongs to the KAE1 / TsaD family. It depends on Fe(2+) as a cofactor.

The protein resides in the cytoplasm. It carries out the reaction L-threonylcarbamoyladenylate + adenosine(37) in tRNA = N(6)-L-threonylcarbamoyladenosine(37) in tRNA + AMP + H(+). Required for the formation of a threonylcarbamoyl group on adenosine at position 37 (t(6)A37) in tRNAs that read codons beginning with adenine. Is involved in the transfer of the threonylcarbamoyl moiety of threonylcarbamoyl-AMP (TC-AMP) to the N6 group of A37, together with TsaE and TsaB. TsaD likely plays a direct catalytic role in this reaction. This Bacteroides fragilis (strain ATCC 25285 / DSM 2151 / CCUG 4856 / JCM 11019 / LMG 10263 / NCTC 9343 / Onslow / VPI 2553 / EN-2) protein is tRNA N6-adenosine threonylcarbamoyltransferase.